We begin with the raw amino-acid sequence, 309 residues long: Ribonuclease Z (309 aa).

7 residues coordinate Zn(2+): histidine 63, histidine 65, aspartate 67, histidine 68, histidine 145, aspartate 216, and histidine 274. Aspartate 67 (proton acceptor) is an active-site residue.

The protein belongs to the RNase Z family. In terms of assembly, homodimer. It depends on Zn(2+) as a cofactor.

It carries out the reaction Endonucleolytic cleavage of RNA, removing extra 3' nucleotides from tRNA precursor, generating 3' termini of tRNAs. A 3'-hydroxy group is left at the tRNA terminus and a 5'-phosphoryl group is left at the trailer molecule.. In terms of biological role, zinc phosphodiesterase, which displays some tRNA 3'-processing endonuclease activity. Probably involved in tRNA maturation, by removing a 3'-trailer from precursor tRNA. This chain is Ribonuclease Z, found in Streptococcus pyogenes serotype M1.